The primary structure comprises 216 residues: tRNA (guanine-N(7)-)-methyltransferase (216 aa).

Positions 44, 69, 96, and 118 each coordinate S-adenosyl-L-methionine. The active site involves Asp-118. Lys-122 is a binding site for substrate. Positions 124–129 (RHEKRR) are interaction with RNA. Substrate contacts are provided by residues Asp-154 and 191–194 (TEYE).

It belongs to the class I-like SAM-binding methyltransferase superfamily. TrmB family.

The enzyme catalyses guanosine(46) in tRNA + S-adenosyl-L-methionine = N(7)-methylguanosine(46) in tRNA + S-adenosyl-L-homocysteine. It functions in the pathway tRNA modification; N(7)-methylguanine-tRNA biosynthesis. Functionally, catalyzes the formation of N(7)-methylguanine at position 46 (m7G46) in tRNA. This is tRNA (guanine-N(7)-)-methyltransferase from Geobacillus thermodenitrificans (strain NG80-2).